The following is a 250-amino-acid chain: Entry-fusion complex associated protein OPG095 (250 aa).

Residue Gly2 is the site of N-myristoyl glycine; by host attachment. Positions 2-12 are targeting to MV membrane; it reads GAAASIQTTVN. At 2-183 the chain is on the virion surface side; that stretch reads GAAASIQTTV…IAPRQVAGTG (182 aa). Intrachain disulfides connect Cys34-Cys57, Cys49-Cys136, and Cys116-Cys158. Residues 184 to 204 traverse the membrane as a helical segment; that stretch reads VQFYMIVIGVIILAALFMYYA. Residues 205 to 250 lie on the Intravirion side of the membrane; sequence KRMLFTSTNDKIKLILANKENVHWTTYMDTFFRTSPMIIATTDIQN.

Belongs to the orthopoxvirus OPG095 family. In terms of assembly, component of the entry fusion complex (EFC) composed of OPG053, OPG076, OPG086, OPG094, OPG095, OPG099, OPG107, OPG143, OPG104, OPG147 and OPG155. Except for OPG095 and OPG053, each of the EFC proteins is required for assembly or stability of the complex. Myristoylated. Post-translationally, disulfid bonds are oxidized in the cytoplasm by OPG088 protein. In terms of processing, unglycosylated because produced in viral factories instead of the classic ER -Golgi route.

It is found in the virion membrane. In terms of biological role, component of the entry fusion complex (EFC), which consists of 11 proteins. During cell infection, this complex mediates entry of the virion core into the host cytoplasm by a two-step mechanism consisting of lipid mixing of the viral and cellular membranes and subsequent pore formation. This Monkeypox virus protein is Entry-fusion complex associated protein OPG095 (OPG099).